A 2448-amino-acid chain; its full sequence is Cysteine repeat modular protein 1 (2448 aa).

A helical transmembrane segment spans residues 9-29; it reads TSTNLLNIFALYFSAICFIYC. Asn48, Asn89, Asn248, Asn284, Asn461, Asn503, Asn542, Asn598, and Asn619 each carry an N-linked (GlcNAc...) asparagine glycan. FU repeat units follow at residues 431-481, 485-530, 535-566, and 567-611; these read KNTC…GYYF, FMQC…GFYI, NFKCEKCNASCLSCTGPSFDQCLSCKSGFYLS, and SNTC…GQFA. FU repeat units follow at residues 645–694, 698–727, 728–772, 775–813, 819–868, 904–947, 950–983, 984–1027, 1063–1109, and 1113–1144; these read NNQC…GYFP, TSVCQACQGKCKTCTSSNTCSSCINGYYLQ, DSNC…GTFG, QNICQTCIDGCQTCYGPTLLECYSCEQGFFFQAFQITNN, KGMC…YYLS, GRVC…GFPD, QNVCVACHPTCVTCQGPLATDCLTCISGYYLNPA, NNIC…RTYP, QGAC…NQYV, and QNRCLPCFYSCSSCFGPNSNQCFSCQPNGFYL. N-linked (GlcNAc...) asparagine glycans are attached at residues Asn761 and Asn812. Residue Asn934 is glycosylated (N-linked (GlcNAc...) asparagine). An N-linked (GlcNAc...) asparagine glycan is attached at Asn1002. N-linked (GlcNAc...) asparagine glycosylation is present at Asn1146. The stretch at 1147–1193 is one FU 15 repeat; the sequence is QTQCSICDISCLQCSGPGFDSCIQCAQGYYKLGDSVCVQSCPDGFFL. A glycan (N-linked (GlcNAc...) asparagine) is linked at Asn1194. FU repeat units lie at residues 1197 to 1232, 1234 to 1279, 1281 to 1332, 1346 to 1394, and 1402 to 1436; these read NNQCQSCNQVCFNCNGPQNSDCTSCAAGYYQSISNQ, GIIC…GYRS, KGVC…GTFQ, SYYC…GFIL, and NQYCKVCKINCVSCIQQFFYYQENCYSSCPVGTVQ. Residues Asn1296, Asn1328, and Asn1365 are each glycosylated (N-linked (GlcNAc...) asparagine). 4 N-linked (GlcNAc...) asparagine glycosylation sites follow: Asn1506, Asn1601, Asn1628, and Asn1670. Residues 1739–1773 form the EGF-like domain; the sequence is SDISCSLNLCMNSGKCVPNSIFCSCPSAFTGPKCQ. Intrachain disulfides connect Cys1743-Cys1754, Cys1748-Cys1761, and Cys1763-Cys1772. Asn1800, Asn1849, Asn1877, Asn1942, Asn2117, Asn2155, and Asn2179 each carry an N-linked (GlcNAc...) asparagine glycan. Transmembrane regions (helical) follow at residues 2201 to 2221 and 2238 to 2258; these read LYIMIIISLGIGAAFLGYSAI and IYFLYYFPIISFLVGPTNQFV. Asn2260 carries N-linked (GlcNAc...) asparagine glycosylation. Helical transmembrane passes span 2267–2287, 2296–2316, 2352–2372, and 2386–2406; these read SLTIIASHFAFSSIYVQILPF, ILTSIITVSSTSVCIYWTIGV, MIGLVLAVLALISISVFIGLC, and AVFLIDLIADAIVVFILIIVG.

The protein localises to the membrane. Its function is as follows. Required for mucocyst secretion. The polypeptide is Cysteine repeat modular protein 1 (Tetrahymena thermophila (strain SB210)).